The sequence spans 441 residues: ATP-dependent protease ATPase subunit HslU (441 aa).

Residues Ile18 and 60–65 contribute to the ATP site; that span reads GVGKTE. Residues 131 to 158 form a disordered region; the sequence is ILDALLPRPRGSEYDHARDESSTRQTFR. The span at 140-152 shows a compositional bias: basic and acidic residues; it reads RGSEYDHARDESS. ATP-binding residues include Asp254, Glu320, and Arg392.

It belongs to the ClpX chaperone family. HslU subfamily. A double ring-shaped homohexamer of HslV is capped on each side by a ring-shaped HslU homohexamer. The assembly of the HslU/HslV complex is dependent on binding of ATP.

Its subcellular location is the cytoplasm. Its function is as follows. ATPase subunit of a proteasome-like degradation complex; this subunit has chaperone activity. The binding of ATP and its subsequent hydrolysis by HslU are essential for unfolding of protein substrates subsequently hydrolyzed by HslV. HslU recognizes the N-terminal part of its protein substrates and unfolds these before they are guided to HslV for hydrolysis. In Chromohalobacter salexigens (strain ATCC BAA-138 / DSM 3043 / CIP 106854 / NCIMB 13768 / 1H11), this protein is ATP-dependent protease ATPase subunit HslU.